A 262-amino-acid polypeptide reads, in one-letter code: Small ribosomal subunit protein eS1 (262 aa).

The protein belongs to the eukaryotic ribosomal protein eS1 family. As to quaternary structure, component of the small ribosomal subunit. Mature ribosomes consist of a small (40S) and a large (60S) subunit. The 40S subunit contains about 33 different proteins and 1 molecule of RNA (18S). The 60S subunit contains about 49 different proteins and 3 molecules of RNA (25S, 5.8S and 5S).

The protein localises to the cytoplasm. The protein is Small ribosomal subunit protein eS1 of Theileria parva (East coast fever infection agent).